We begin with the raw amino-acid sequence, 253 residues long: Uracil-DNA glycosylase (253 aa).

The active-site Proton acceptor is the Asp-79.

Belongs to the uracil-DNA glycosylase (UDG) superfamily. UNG family.

Its subcellular location is the cytoplasm. It catalyses the reaction Hydrolyzes single-stranded DNA or mismatched double-stranded DNA and polynucleotides, releasing free uracil.. Excises uracil residues from the DNA which can arise as a result of misincorporation of dUMP residues by DNA polymerase or due to deamination of cytosine. This is Uracil-DNA glycosylase from Xylella fastidiosa (strain M12).